The primary structure comprises 369 residues: Flagellar P-ring protein (369 aa).

The signal sequence occupies residues 1–22 (MTKFKHLLALAALLLAAGAAQA).

Belongs to the FlgI family. The basal body constitutes a major portion of the flagellar organelle and consists of four rings (L,P,S, and M) mounted on a central rod.

The protein localises to the periplasm. It is found in the bacterial flagellum basal body. Functionally, assembles around the rod to form the L-ring and probably protects the motor/basal body from shearing forces during rotation. In Pseudomonas aeruginosa (strain LESB58), this protein is Flagellar P-ring protein.